The chain runs to 361 residues: MLYNLLLPHIHNSHIANLFHYITFRGGLAIIITLSLSFITGPILIEFLRSLQKNGQPIRSDGPESHQTKVGTPTMGGIMIILSSCLSTLLLADLTNKYIWITLFGFISFGIIGFMDDYAKVTKDNHYGVRGKSKLLLQGIISFIICVLLEYLDKSPSHLLNVPFFKNLSLDLGYCYIVFAIFVIVGSSNAVNLTDGLDGLATVPIAFTAGSFALISYLVGNLIYSNYLQLTYIPNTGELTVLCAGLVGSCLGFLWFNAQPAEVFMGDTGSLSLGGVLGIISVITKHEIVLAIVGGLFVIETASVILQVYYFKATKGKRIFKMAPLHHHFEKHGWAESKVVIRFWIISVIFALIGLSSLKLR.

10 helical membrane-spanning segments follow: residues 28-48, 74-94, 99-119, 133-153, 168-188, 203-223, 236-256, 263-283, 288-308, and 338-358; these read LAII…IEFL, TMGG…LADL, IWIT…DDYA, SKLL…EYLD, LSLD…VGSS, VPIA…GNLI, TGEL…FLWF, VFMG…ISVI, IVLA…ILQV, and KVVI…LSSL.

This sequence belongs to the glycosyltransferase 4 family. MraY subfamily. Mg(2+) is required as a cofactor.

Its subcellular location is the cell inner membrane. The catalysed reaction is UDP-N-acetyl-alpha-D-muramoyl-L-alanyl-gamma-D-glutamyl-meso-2,6-diaminopimeloyl-D-alanyl-D-alanine + di-trans,octa-cis-undecaprenyl phosphate = di-trans,octa-cis-undecaprenyl diphospho-N-acetyl-alpha-D-muramoyl-L-alanyl-D-glutamyl-meso-2,6-diaminopimeloyl-D-alanyl-D-alanine + UMP. It functions in the pathway cell wall biogenesis; peptidoglycan biosynthesis. In terms of biological role, catalyzes the initial step of the lipid cycle reactions in the biosynthesis of the cell wall peptidoglycan: transfers peptidoglycan precursor phospho-MurNAc-pentapeptide from UDP-MurNAc-pentapeptide onto the lipid carrier undecaprenyl phosphate, yielding undecaprenyl-pyrophosphoryl-MurNAc-pentapeptide, known as lipid I. In Rickettsia africae (strain ESF-5), this protein is Phospho-N-acetylmuramoyl-pentapeptide-transferase.